A 247-amino-acid chain; its full sequence is ATP synthase subunit a, chloroplastic (247 aa).

A run of 5 helical transmembrane segments spans residues 38-58, 95-115, 134-154, 199-219, and 220-240; these read QVLI…ILVV, VPFI…GALL, INTT…AGIS, LVVV…VMFL, and GLFT…AYIG.

Belongs to the ATPase A chain family. As to quaternary structure, F-type ATPases have 2 components, CF(1) - the catalytic core - and CF(0) - the membrane proton channel. CF(1) has five subunits: alpha(3), beta(3), gamma(1), delta(1), epsilon(1). CF(0) has four main subunits: a, b, b' and c.

The protein localises to the plastid. It is found in the chloroplast thylakoid membrane. Its function is as follows. Key component of the proton channel; it plays a direct role in the translocation of protons across the membrane. The chain is ATP synthase subunit a, chloroplastic from Cicer arietinum (Chickpea).